Reading from the N-terminus, the 424-residue chain is Solute carrier family 67 member A1 (424 aa).

Transmembrane regions (helical) follow at residues 26 to 46, 59 to 79, 90 to 110, 156 to 176, 184 to 204, 243 to 263, 276 to 296, 312 to 332, 334 to 354, and 391 to 411; these read ILLTYVLAATELTCLFMQFSI, IAFGYLQTTFGVLQLLGGPVF, AALTLSFLAALALYLLLAAAS, LGLCFGVGVILGSLLGGTLVS, AILAALATLLGAVLSFTCIPA, IFLVKVASNCPTGLFMVMFSI, AGYLMSFFGLLQMVTQGLVIG, VLVFIVVGLAMAWMSSVFHFC, LVPGLVFSLCTLNVVTDSMLI, and FGVPVFGHVQVAINTLVLLVL.

It belongs to the major facilitator (TC 2.A.1) superfamily. Organic cation transporter (TC 2.A.1.19) family. In terms of assembly, interacts with RNF167. Expressed at high levels in adult and fetal kidney and liver, and adult colon. Expressed in fetal renal proximal tubules (at protein level). Expressed at lower levels in heart, brain and lung.

The protein resides in the apical cell membrane. Functionally, may act as a transporter of organic cations based on a proton efflux antiport mechanism. May play a role in the transport of chloroquine and quinidine-related compounds in kidney. Plays a role in the regulation of lipid metabolism. The polypeptide is Solute carrier family 67 member A1 (Homo sapiens (Human)).